The chain runs to 56 residues: Small ribosomal subunit protein uS14 (56 aa).

It belongs to the universal ribosomal protein uS14 family.

The chain is Small ribosomal subunit protein uS14 (RPS29) from Kluyveromyces lactis (strain ATCC 8585 / CBS 2359 / DSM 70799 / NBRC 1267 / NRRL Y-1140 / WM37) (Yeast).